Here is a 229-residue protein sequence, read N- to C-terminus: Urease accessory protein UreF (229 aa).

Belongs to the UreF family. In terms of assembly, ureD, UreF and UreG form a complex that acts as a GTP-hydrolysis-dependent molecular chaperone, activating the urease apoprotein by helping to assemble the nickel containing metallocenter of UreC. The UreE protein probably delivers the nickel.

Its subcellular location is the cytoplasm. Its function is as follows. Required for maturation of urease via the functional incorporation of the urease nickel metallocenter. In Staphylococcus aureus (strain JH1), this protein is Urease accessory protein UreF.